A 306-amino-acid polypeptide reads, in one-letter code: ClpXP adapter protein SpxH (306 aa).

It belongs to the SpxH family. Interacts with Spx.

It localises to the cytoplasm. Functionally, adapter protein required for efficient degradation of Spx by ClpXP under non-stress conditions. Interaction with Spx stabilizes Spx and exposes the C-terminus of Spx for recognition and proteolysis by ClpXP. This chain is ClpXP adapter protein SpxH, found in Halalkalibacterium halodurans (strain ATCC BAA-125 / DSM 18197 / FERM 7344 / JCM 9153 / C-125) (Bacillus halodurans).